The chain runs to 320 residues: RNA polymerase sigma factor SigA2 (320 aa).

Residues Met-89–Thr-159 are sigma-70 factor domain-2. An Interaction with polymerase core subunit RpoC motif is present at residues Asp-113 to Gln-116. The interval Glu-168–Tyr-243 is sigma-70 factor domain-3. Positions Leu-256 to Arg-310 are sigma-70 factor domain-4. The H-T-H motif DNA-binding region spans Leu-282–Arg-301.

The protein belongs to the sigma-70 factor family.

It localises to the cytoplasm. Sigma factors are initiation factors that promote the attachment of RNA polymerase to specific initiation sites and are then released. This sigma factor is a component of the biological clock pathway that affects the circadian expression of a subset of genes in this bacterium. This is RNA polymerase sigma factor SigA2 (sigA2) from Synechococcus elongatus (strain ATCC 33912 / PCC 7942 / FACHB-805) (Anacystis nidulans R2).